A 199-amino-acid chain; its full sequence is dTTP/UTP pyrophosphatase (199 aa).

Catalysis depends on aspartate 73, which acts as the Proton acceptor.

The protein belongs to the Maf family. YhdE subfamily. It depends on a divalent metal cation as a cofactor.

It is found in the cytoplasm. The catalysed reaction is dTTP + H2O = dTMP + diphosphate + H(+). The enzyme catalyses UTP + H2O = UMP + diphosphate + H(+). Functionally, nucleoside triphosphate pyrophosphatase that hydrolyzes dTTP and UTP. May have a dual role in cell division arrest and in preventing the incorporation of modified nucleotides into cellular nucleic acids. The polypeptide is dTTP/UTP pyrophosphatase (Caldicellulosiruptor bescii (strain ATCC BAA-1888 / DSM 6725 / KCTC 15123 / Z-1320) (Anaerocellum thermophilum)).